A 393-amino-acid polypeptide reads, in one-letter code: NAD(P)H-quinone oxidoreductase subunit H, chloroplastic (393 aa).

This sequence belongs to the complex I 49 kDa subunit family. As to quaternary structure, NDH is composed of at least 16 different subunits, 5 of which are encoded in the nucleus.

It localises to the plastid. It is found in the chloroplast thylakoid membrane. The catalysed reaction is a plastoquinone + NADH + (n+1) H(+)(in) = a plastoquinol + NAD(+) + n H(+)(out). The enzyme catalyses a plastoquinone + NADPH + (n+1) H(+)(in) = a plastoquinol + NADP(+) + n H(+)(out). Its function is as follows. NDH shuttles electrons from NAD(P)H:plastoquinone, via FMN and iron-sulfur (Fe-S) centers, to quinones in the photosynthetic chain and possibly in a chloroplast respiratory chain. The immediate electron acceptor for the enzyme in this species is believed to be plastoquinone. Couples the redox reaction to proton translocation, and thus conserves the redox energy in a proton gradient. The polypeptide is NAD(P)H-quinone oxidoreductase subunit H, chloroplastic (Sorghum bicolor (Sorghum)).